Here is a 404-residue protein sequence, read N- to C-terminus: Multidrug resistance protein MdtG (404 aa).

Helical transmembrane passes span 19–39, 56–76, 90–110, 113–133, 144–164, 171–191, 222–242, 254–274, 288–308, 317–337, and 376–396; these read LGCF…PLYV, LVFS…GGLA, LGMA…QFLI, ALLG…ATQV, TLST…GLLA, PVFF…FFFI, LFVT…ILTL, IAFI…LSAP, ILIV…FVQT, FLLG…LVYN, and AVFC…WNSL.

It belongs to the major facilitator superfamily. DHA1 family. MdtG (TC 2.A.1.2.20) subfamily.

Its subcellular location is the cell inner membrane. The chain is Multidrug resistance protein MdtG from Salmonella arizonae (strain ATCC BAA-731 / CDC346-86 / RSK2980).